Reading from the N-terminus, the 84-residue chain is UPF0457 protein BCE33L2961 (84 aa).

The protein belongs to the UPF0457 family.

The sequence is that of UPF0457 protein BCE33L2961 from Bacillus cereus (strain ZK / E33L).